A 335-amino-acid polypeptide reads, in one-letter code: Lipase chaperone (335 aa).

A helical transmembrane segment spans residues 1-21 (MSGSILLLPLAIALGLGFFIA).

The protein belongs to the lipase chaperone family.

It localises to the cell inner membrane. Functionally, may be involved in the folding of the extracellular lipase during its passage through the periplasm. The polypeptide is Lipase chaperone (Stutzerimonas stutzeri (strain A1501) (Pseudomonas stutzeri)).